The following is a 359-amino-acid chain: Peptide chain release factor 1 (359 aa).

Q235 is modified (N5-methylglutamine). Residues 282-307 are compositionally biased toward basic and acidic residues; that stretch reads RQRADSERSADRKSQVGSGDRSERIR. The interval 282–309 is disordered; sequence RQRADSERSADRKSQVGSGDRSERIRTY.

This sequence belongs to the prokaryotic/mitochondrial release factor family. Methylated by PrmC. Methylation increases the termination efficiency of RF1.

It is found in the cytoplasm. In terms of biological role, peptide chain release factor 1 directs the termination of translation in response to the peptide chain termination codons UAG and UAA. This chain is Peptide chain release factor 1, found in Allorhizobium ampelinum (strain ATCC BAA-846 / DSM 112012 / S4) (Agrobacterium vitis (strain S4)).